The sequence spans 290 residues: Arylamine N-acetyltransferase 1 (290 aa).

M1 carries the N-acetylmethionine modification. Residue C68 is the Acyl-thioester intermediate of the active site. S103 contacts CoA. A substrate-binding site is contributed by 106–107 (VH). Catalysis depends on residues H107 and D122. Residue Y208 participates in CoA binding.

It belongs to the arylamine N-acetyltransferase family.

The protein localises to the cytoplasm. It catalyses the reaction an arylamine + acetyl-CoA = an N-acetylarylamine + CoA. Functionally, participates in the detoxification of a plethora of hydrazine and arylamine drugs. Isoniazid, 2-aminofluorene and anisidine are preferred substrates for NAT-1. No activity with p-aminobenzoic acid (PABA) nor SMZ. This Mus musculus (Mouse) protein is Arylamine N-acetyltransferase 1 (Nat1).